Here is a 149-residue protein sequence, read N- to C-terminus: Large ribosomal subunit protein uL13 (149 aa).

This sequence belongs to the universal ribosomal protein uL13 family. Part of the 50S ribosomal subunit.

In terms of biological role, this protein is one of the early assembly proteins of the 50S ribosomal subunit, although it is not seen to bind rRNA by itself. It is important during the early stages of 50S assembly. The chain is Large ribosomal subunit protein uL13 from Borrelia recurrentis (strain A1).